Consider the following 501-residue polypeptide: Solute carrier family 2, facilitated glucose transporter member 5 (501 aa).

Methionine 1 carries the N-acetylmethionine modification. Residues methionine 1–alanine 18 are Cytoplasmic-facing. A helical membrane pass occupies residues leucine 19–valine 39. Tyrosine 32 is a D-fructose binding site. Residues asparagine 40–threonine 68 lie on the Extracellular side of the membrane. An N-linked (GlcNAc...) asparagine glycan is attached at asparagine 51. The chain crosses the membrane as a helical span at residues leucine 69–proline 91. The Cytoplasmic portion of the chain corresponds to leucine 92–arginine 98. A helical membrane pass occupies residues lysine 99 to serine 119. The Extracellular portion of the chain corresponds to arginine 120 to glutamate 126. A helical transmembrane segment spans residues leucine 127–tyrosine 149. At leucine 150 to alanine 161 the chain is on the cytoplasmic side. A helical transmembrane segment spans residues leucine 162 to leucine 182. Glutamine 167 is a binding site for D-fructose. Residues arginine 183–tryptophan 192 lie on the Extracellular side of the membrane. The chain crosses the membrane as a helical span at residues proline 193–phenylalanine 213. Residues proline 214–glutamine 277 are Cytoplasmic-facing. A helical membrane pass occupies residues leucine 278–tyrosine 298. D-fructose contacts are provided by residues glutamine 288 and isoleucine 296–tyrosine 298. At tyrosine 299–histidine 313 the chain is on the extracellular side. Residues valine 314–phenylalanine 334 form a helical membrane-spanning segment. The Cytoplasmic portion of the chain corresponds to valine 335–arginine 342. Residues leucine 343–leucine 363 form a helical membrane-spanning segment. Residues alanine 364–tryptophan 371 are Extracellular-facing. A helical membrane pass occupies residues methionine 372–isoleucine 394. Histidine 387 contacts D-fructose. At proline 395–phenylalanine 412 the chain is on the cytoplasmic side. The chain crosses the membrane as a helical span at residues methionine 413 to isoleucine 433. Histidine 419–tryptophan 420 lines the D-fructose pocket. Residues glutamine 434 to proline 439 lie on the Extracellular side of the membrane. The helical transmembrane segment at tyrosine 440–valine 460 threads the bilayer. Residues proline 461–glutamine 501 lie on the Cytoplasmic side of the membrane.

This sequence belongs to the major facilitator superfamily. Sugar transporter (TC 2.A.1.1) family. Glucose transporter subfamily.

Its subcellular location is the apical cell membrane. The protein resides in the cell membrane. It is found in the sarcolemma. The catalysed reaction is D-fructose(out) = D-fructose(in). In terms of biological role, functions as a fructose transporter that has only low activity with other monosaccharides. Can mediate the uptake of deoxyglucose, but with low efficiency. Essential for fructose uptake in the small intestine. Plays a role in the regulation of salt uptake and blood pressure in response to dietary fructose. Required for the development of high blood pressure in response to high dietary fructose intake. The protein is Solute carrier family 2, facilitated glucose transporter member 5 of Pongo abelii (Sumatran orangutan).